A 175-amino-acid chain; its full sequence is uncharacterized protein (175 aa).

The protein resides in the cytoplasm. It localises to the nucleus. This is an uncharacterized protein from Schizosaccharomyces pombe (strain 972 / ATCC 24843) (Fission yeast).